Reading from the N-terminus, the 144-residue chain is Large ribosomal subunit protein uL11 (144 aa).

The protein belongs to the universal ribosomal protein uL11 family. As to quaternary structure, part of the ribosomal stalk of the 50S ribosomal subunit. Interacts with L10 and the large rRNA to form the base of the stalk. L10 forms an elongated spine to which L12 dimers bind in a sequential fashion forming a multimeric L10(L12)X complex. One or more lysine residues are methylated.

Functionally, forms part of the ribosomal stalk which helps the ribosome interact with GTP-bound translation factors. This is Large ribosomal subunit protein uL11 from Frankia alni (strain DSM 45986 / CECT 9034 / ACN14a).